The primary structure comprises 179 residues: Large ribosomal subunit protein uL6 (179 aa).

This sequence belongs to the universal ribosomal protein uL6 family. As to quaternary structure, part of the 50S ribosomal subunit.

Its function is as follows. This protein binds to the 23S rRNA, and is important in its secondary structure. It is located near the subunit interface in the base of the L7/L12 stalk, and near the tRNA binding site of the peptidyltransferase center. The polypeptide is Large ribosomal subunit protein uL6 (Buchnera aphidicola subsp. Baizongia pistaciae (strain Bp)).